The sequence spans 512 residues: NAD(P)H-quinone oxidoreductase subunit 2, organellar chromatophore (512 aa).

The next 14 membrane-spanning stretches (helical) occupy residues 6–26 (LLALPLNAATIVPEGAILLAL), 43–63 (WVPPICYAGLGSALILLASQW), 80–100 (LAIAFRAIIATSTLFSLMISW), 107–127 (GAPMGEYAAILLAATLGAMFL), 133–153 (LVSIFVSLETLSVSSYLLAGY), 168–188 (LLVGSATAAVFLYGASLLYGL), 210–230 (AALALVFVLATVAFKIAAVPF), 242–262 (PTPIVAFLSVGSKTAGFALAL), 276–296 (WKFLFSLLAILSMVLGNIVAL), 304–324 (MLAYSSIGQAGFVMIGLVCGT), 332–352 (ILYLATYLFMNMGAFACVILF), 376–396 (IGLSLCLLSLGGIPPMLGFFG), 411–431 (LLVVTGLITSVVSIYYYISVI), and 464–484 (VALLVCVIVTGIGGIFSNPLF).

Belongs to the complex I subunit 2 family. In terms of assembly, NDH-1 can be composed of about 15 different subunits; different subcomplexes with different compositions have been identified which probably have different functions.

The protein resides in the plastid. The protein localises to the organellar chromatophore thylakoid membrane. The enzyme catalyses a plastoquinone + NADH + (n+1) H(+)(in) = a plastoquinol + NAD(+) + n H(+)(out). The catalysed reaction is a plastoquinone + NADPH + (n+1) H(+)(in) = a plastoquinol + NADP(+) + n H(+)(out). Functionally, NDH-1 shuttles electrons from an unknown electron donor, via FMN and iron-sulfur (Fe-S) centers, to quinones in the respiratory and/or the photosynthetic chain. The immediate electron acceptor for the enzyme in this species is believed to be plastoquinone. Couples the redox reaction to proton translocation, and thus conserves the redox energy in a proton gradient. Cyanobacterial NDH-1 also plays a role in inorganic carbon-concentration. This is NAD(P)H-quinone oxidoreductase subunit 2, organellar chromatophore from Paulinella chromatophora.